The primary structure comprises 334 residues: tRNA-dihydrouridine(20/20a) synthase (334 aa).

FMN is bound by residues 18 to 20 (PMM) and glutamine 71. Cysteine 101 acts as the Proton donor in catalysis. Residues lysine 140, histidine 172, 212–214 (NGG), and 234–235 (GR) each bind FMN.

The protein belongs to the Dus family. DusA subfamily. The cofactor is FMN.

It catalyses the reaction 5,6-dihydrouridine(20) in tRNA + NADP(+) = uridine(20) in tRNA + NADPH + H(+). The enzyme catalyses 5,6-dihydrouridine(20) in tRNA + NAD(+) = uridine(20) in tRNA + NADH + H(+). The catalysed reaction is 5,6-dihydrouridine(20a) in tRNA + NADP(+) = uridine(20a) in tRNA + NADPH + H(+). It carries out the reaction 5,6-dihydrouridine(20a) in tRNA + NAD(+) = uridine(20a) in tRNA + NADH + H(+). Catalyzes the synthesis of 5,6-dihydrouridine (D), a modified base found in the D-loop of most tRNAs, via the reduction of the C5-C6 double bond in target uridines. Specifically modifies U20 and U20a in tRNAs. The chain is tRNA-dihydrouridine(20/20a) synthase from Xanthomonas axonopodis pv. citri (strain 306).